The primary structure comprises 98 residues: Small ribosomal subunit protein bS20 (98 aa).

Belongs to the bacterial ribosomal protein bS20 family.

In terms of biological role, binds directly to 16S ribosomal RNA. In Prochlorococcus marinus (strain NATL1A), this protein is Small ribosomal subunit protein bS20.